Here is a 444-residue protein sequence, read N- to C-terminus: Na(+)-translocating NADH-quinone reductase subunit A (444 aa).

This sequence belongs to the NqrA family. In terms of assembly, composed of six subunits; NqrA, NqrB, NqrC, NqrD, NqrE and NqrF.

It carries out the reaction a ubiquinone + n Na(+)(in) + NADH + H(+) = a ubiquinol + n Na(+)(out) + NAD(+). Its function is as follows. NQR complex catalyzes the reduction of ubiquinone-1 to ubiquinol by two successive reactions, coupled with the transport of Na(+) ions from the cytoplasm to the periplasm. NqrA to NqrE are probably involved in the second step, the conversion of ubisemiquinone to ubiquinol. The chain is Na(+)-translocating NADH-quinone reductase subunit A from Shewanella denitrificans (strain OS217 / ATCC BAA-1090 / DSM 15013).